Consider the following 496-residue polypeptide: Glycerol kinase (496 aa).

An ADP-binding site is contributed by Thr-12. Residues Thr-12, Thr-13, and Ser-14 each coordinate ATP. Thr-12 provides a ligand contact to sn-glycerol 3-phosphate. Arg-16 contributes to the ADP binding site. Residues Arg-82, Glu-83, and Tyr-134 each coordinate sn-glycerol 3-phosphate. Residues Arg-82, Glu-83, and Tyr-134 each contribute to the glycerol site. Position 230 is a phosphohistidine; by HPr (His-230). Asp-244 is a binding site for sn-glycerol 3-phosphate. 2 residues coordinate glycerol: Asp-244 and Gln-245. Residues Thr-266 and Gly-309 each contribute to the ADP site. Thr-266, Gly-309, Gln-313, and Gly-410 together coordinate ATP. ADP contacts are provided by Gly-410 and Asn-414.

This sequence belongs to the FGGY kinase family. In terms of assembly, homotetramer and homodimer (in equilibrium). In terms of processing, the phosphoenolpyruvate-dependent sugar phosphotransferase system (PTS), including enzyme I, and histidine-containing protein (HPr) are required for the phosphorylation, which leads to the activation of the enzyme.

It carries out the reaction glycerol + ATP = sn-glycerol 3-phosphate + ADP + H(+). It functions in the pathway polyol metabolism; glycerol degradation via glycerol kinase pathway; sn-glycerol 3-phosphate from glycerol: step 1/1. Activated by phosphorylation and inhibited by fructose 1,6-bisphosphate (FBP). Its function is as follows. Key enzyme in the regulation of glycerol uptake and metabolism. Catalyzes the phosphorylation of glycerol to yield sn-glycerol 3-phosphate. This Bacillus cytotoxicus (strain DSM 22905 / CIP 110041 / 391-98 / NVH 391-98) protein is Glycerol kinase.